The following is a 172-amino-acid chain: Major exported protein (172 aa).

Belongs to the hcp1 family.

Its subcellular location is the secreted. The protein is Major exported protein (hcpA) of Pseudomonas aeruginosa (strain ATCC 15692 / DSM 22644 / CIP 104116 / JCM 14847 / LMG 12228 / 1C / PRS 101 / PAO1).